We begin with the raw amino-acid sequence, 281 residues long: AB hydrolase superfamily protein YclE (281 aa).

In terms of domain architecture, AB hydrolase-1 spans 30-268 (SAVYYPRLFS…SGHQPMLEEP (239 aa)). Catalysis depends on Ser95, which acts as the Nucleophile. The active site involves Asp232. The active-site Proton donor is the His261.

It belongs to the AB hydrolase superfamily.

The chain is AB hydrolase superfamily protein YclE (yclE) from Bacillus subtilis (strain 168).